We begin with the raw amino-acid sequence, 187 residues long: Elongation factor P (187 aa).

This sequence belongs to the elongation factor P family.

It is found in the cytoplasm. Its pathway is protein biosynthesis; polypeptide chain elongation. Involved in peptide bond synthesis. Stimulates efficient translation and peptide-bond synthesis on native or reconstituted 70S ribosomes in vitro. Probably functions indirectly by altering the affinity of the ribosome for aminoacyl-tRNA, thus increasing their reactivity as acceptors for peptidyl transferase. This Azobacteroides pseudotrichonymphae genomovar. CFP2 protein is Elongation factor P.